Here is a 193-residue protein sequence, read N- to C-terminus: General stress protein 16U (193 aa).

This sequence belongs to the CAPAB/TerDEXZ family.

This is General stress protein 16U (yceD) from Bacillus subtilis (strain 168).